The sequence spans 439 residues: Large ribosomal subunit protein mL65 (439 aa).

The protein belongs to the mitochondrion-specific ribosomal protein mL65 family. Component of the mitochondrial large ribosomal subunit (mt-LSU). Mature mammalian 55S mitochondrial ribosomes consist of a small (28S) and a large (39S) subunit. The 28S small subunit contains a 12S ribosomal RNA (12S mt-rRNA) and 30 different proteins. The 39S large subunit contains a 16S rRNA (16S mt-rRNA), a copy of mitochondrial valine transfer RNA (mt-tRNA(Val)), which plays an integral structural role, and 52 different proteins. mL65 forms a heterodimer with mL37. As to expression, heart, skeletal muscle, kidney and liver. Lower expression in placenta and peripheral blood leukocytes.

The protein resides in the mitochondrion. This is Large ribosomal subunit protein mL65 (MRPS30) from Homo sapiens (Human).